We begin with the raw amino-acid sequence, 337 residues long: GTP 3',8-cyclase (337 aa).

The 225-residue stretch at 18 to 242 (NFGRRFHYLR…DKADILDGPA (225 aa)) folds into the Radical SAM core domain. Arg-27 contacts GTP. [4Fe-4S] cluster is bound by residues Cys-34 and Cys-38. Tyr-40 is a binding site for S-adenosyl-L-methionine. Cys-41 provides a ligand contact to [4Fe-4S] cluster. Arg-76 is a binding site for GTP. Gly-80 provides a ligand contact to S-adenosyl-L-methionine. Position 107 (Thr-107) interacts with GTP. Ser-131 contributes to the S-adenosyl-L-methionine binding site. Lys-168 contacts GTP. Residue Met-202 coordinates S-adenosyl-L-methionine. Residues Cys-265 and Cys-268 each contribute to the [4Fe-4S] cluster site. 270 to 272 (RLR) serves as a coordination point for GTP. [4Fe-4S] cluster is bound at residue Cys-282.

Belongs to the radical SAM superfamily. MoaA family. As to quaternary structure, monomer and homodimer. [4Fe-4S] cluster is required as a cofactor.

It catalyses the reaction GTP + AH2 + S-adenosyl-L-methionine = (8S)-3',8-cyclo-7,8-dihydroguanosine 5'-triphosphate + 5'-deoxyadenosine + L-methionine + A + H(+). It participates in cofactor biosynthesis; molybdopterin biosynthesis. Catalyzes the cyclization of GTP to (8S)-3',8-cyclo-7,8-dihydroguanosine 5'-triphosphate. In Shewanella denitrificans (strain OS217 / ATCC BAA-1090 / DSM 15013), this protein is GTP 3',8-cyclase.